Here is a 294-residue protein sequence, read N- to C-terminus: ATP synthase gamma chain (294 aa).

It belongs to the ATPase gamma chain family. F-type ATPases have 2 components, CF(1) - the catalytic core - and CF(0) - the membrane proton channel. CF(1) has five subunits: alpha(3), beta(3), gamma(1), delta(1), epsilon(1). CF(0) has three main subunits: a, b and c.

It is found in the cell inner membrane. In terms of biological role, produces ATP from ADP in the presence of a proton gradient across the membrane. The gamma chain is believed to be important in regulating ATPase activity and the flow of protons through the CF(0) complex. This chain is ATP synthase gamma chain, found in Rhizobium leguminosarum bv. trifolii (strain WSM2304).